Reading from the N-terminus, the 324-residue chain is Holliday junction branch migration complex subunit RuvB (324 aa).

Residues 1 to 168 (MEDLALRPKT…FGIVEHLEYY (168 aa)) form a large ATPase domain (RuvB-L) region. ATP is bound by residues Tyr-14, Ile-15, Gly-48, Lys-51, Thr-52, Thr-53, Asp-97, Thr-146, Tyr-168, and Arg-205. Thr-52 contacts Mg(2+). The small ATPAse domain (RuvB-S) stretch occupies residues 169-239 (TPEELAQGVM…RALEALAALG (71 aa)). A head domain (RuvB-H) region spans residues 242 to 324 (ELGLEKRDRE…PPPVGPLLEP (83 aa)). The DNA site is built by Arg-297 and Arg-302.

The protein belongs to the RuvB family. In terms of assembly, homohexamer. Forms a complex with RuvA. Electron microscopic images suggest 2 closely interacting RuvA tetramers sandwich the HJ DNA; each tetramer associates with an RuvB hexamer. Forms 2 complexes with Holliday junction (HJ) DNA which probably have 1 and 2 RuvA tetramers per complex (called complex I and complex II). Forms an RuvA(8)-RuvB(12)-Holliday junction (HJ) complex. HJ DNA is sandwiched between 2 RuvA tetramers; dsDNA enters through RuvA and exits via RuvB. An RuvB hexamer assembles on each DNA strand where it exits the tetramer. Each RuvB hexamer is contacted by two RuvA subunits (via domain III) on 2 adjacent RuvB subunits; this complex drives branch migration. In the full resolvosome a probable DNA-RuvA(4)-RuvB(12)-RuvC(2) complex forms which resolves the HJ. Mg(2+) is required as a cofactor.

It is found in the cytoplasm. It carries out the reaction ATP + H2O = ADP + phosphate + H(+). With respect to regulation, the activity of RuvB is enhanced by E.coli RuvA. In terms of biological role, the RuvA-RuvB-RuvC complex processes Holliday junction (HJ) DNA during genetic recombination and DNA repair, while the RuvA-RuvB complex plays an important role in the rescue of blocked DNA replication forks via replication fork reversal (RFR). RuvA specifically binds to HJ cruciform DNA, conferring on it an open structure. The RuvB hexamer acts as an ATP-dependent pump, pulling dsDNA into and through the RuvAB complex. RuvB forms 2 homohexamers on either side of HJ DNA bound by 1 or 2 RuvA tetramers; 4 subunits per hexamer contact DNA at a time. Coordinated motions by a converter formed by DNA-disengaged RuvB subunits stimulates ATP hydrolysis and nucleotide exchange. Immobilization of the converter enables RuvB to convert the ATP-contained energy into a lever motion, pulling 2 nucleotides of DNA out of the RuvA tetramer per ATP hydrolyzed, thus driving DNA branch migration. The RuvB motors rotate together with the DNA substrate, which together with the progressing nucleotide cycle form the mechanistic basis for DNA recombination by continuous HJ branch migration. Branch migration allows RuvC to scan DNA until it finds its consensus sequence, where it cleaves and resolves cruciform DNA. Functionally, ruvB is a Mg(2+)-dependent, DNA-dependent ATPase with an equal preference for supercoiled and linear dsDNA; all (d)NTPs tested were efficiently hydrolyzed. Promotes Holliday junction (HJ) dissociation at 60 degrees Celsius in the presence of ATP but not ATP-gamma-S or ADP; (d)ATP, (d)CTP and dTTP also power dissociation in the absence of any RuvA. RuvA stimulates the ATPase of RuvB in the presence of dsDNA and HJ branch migration by RuvB. Excess RuvB stimulates some branch migration in vitro even in the presence of mutant RuvA. The polypeptide is Holliday junction branch migration complex subunit RuvB (Thermus thermophilus (strain ATCC 27634 / DSM 579 / HB8)).